The primary structure comprises 130 residues: Small ribosomal subunit protein eS8 (130 aa).

It belongs to the eukaryotic ribosomal protein eS8 family. Part of the 30S ribosomal subunit.

This is Small ribosomal subunit protein eS8 from Ignicoccus hospitalis (strain KIN4/I / DSM 18386 / JCM 14125).